The sequence spans 89 residues: uncharacterized protein (89 aa).

Residues 1 to 89 (MEKYEKAAEI…KEIIKLVDEL (89 aa)) enclose the HTH arsR-type domain.

This is an uncharacterized protein from Methanocaldococcus jannaschii (strain ATCC 43067 / DSM 2661 / JAL-1 / JCM 10045 / NBRC 100440) (Methanococcus jannaschii).